We begin with the raw amino-acid sequence, 611 residues long: tRNA uridine 5-carboxymethylaminomethyl modification enzyme MnmG (611 aa).

12–17 (GGGHSG) is a binding site for FAD. 271-285 (GPRYCPSIEEKVYRF) contributes to the NAD(+) binding site.

It belongs to the MnmG family. As to quaternary structure, homodimer. Heterotetramer of two MnmE and two MnmG subunits. The cofactor is FAD.

The protein resides in the cytoplasm. Functionally, NAD-binding protein involved in the addition of a carboxymethylaminomethyl (cmnm) group at the wobble position (U34) of certain tRNAs, forming tRNA-cmnm(5)s(2)U34. In Karelsulcia muelleri (strain GWSS) (Sulcia muelleri), this protein is tRNA uridine 5-carboxymethylaminomethyl modification enzyme MnmG.